The primary structure comprises 251 residues: PF03932 family protein CutC (251 aa).

It belongs to the CutC family.

The protein resides in the cytoplasm. This chain is PF03932 family protein CutC, found in Bacteroides fragilis (strain ATCC 25285 / DSM 2151 / CCUG 4856 / JCM 11019 / LMG 10263 / NCTC 9343 / Onslow / VPI 2553 / EN-2).